Reading from the N-terminus, the 407-residue chain is tRNA pseudouridine synthase 4 (407 aa).

A disordered region spans residues 83-105; that stretch reads FRPAPPHPNDRNRRRRKSNRLPD. Aspartate 115 (nucleophile) is an active-site residue. A disordered region spans residues 274-298; sequence TEQDINPQDGDEKINAKSPTTNSVT. Phosphoserine is present on serine 291. Position 293 is a phosphothreonine (threonine 293). Serine 296 is subject to Phosphoserine. Threonine 406 is modified (phosphothreonine).

This sequence belongs to the pseudouridine synthase TruB family.

The protein localises to the nucleus. It localises to the mitochondrion. It catalyses the reaction uridine(55) in tRNA = pseudouridine(55) in tRNA. The enzyme catalyses a uridine in mRNA = a pseudouridine in mRNA. Responsible for synthesis of pseudouridine from uracil-55 in the psi GC loop of transfer RNAs. Also catalyzes pseudouridylation of mRNAs with the consensus sequence 5'-GGUUCRA-3'. In Schizosaccharomyces pombe (strain 972 / ATCC 24843) (Fission yeast), this protein is tRNA pseudouridine synthase 4.